Consider the following 62-residue polypeptide: DNA-directed RNA polymerase subunit omega (62 aa).

This sequence belongs to the RNA polymerase subunit omega family. In terms of assembly, the RNAP catalytic core consists of 2 alpha, 1 beta, 1 beta' and 1 omega subunit. When a sigma factor is associated with the core the holoenzyme is formed, which can initiate transcription.

The catalysed reaction is RNA(n) + a ribonucleoside 5'-triphosphate = RNA(n+1) + diphosphate. In terms of biological role, promotes RNA polymerase assembly. Latches the N- and C-terminal regions of the beta' subunit thereby facilitating its interaction with the beta and alpha subunits. This chain is DNA-directed RNA polymerase subunit omega, found in Wigglesworthia glossinidia brevipalpis.